A 185-amino-acid chain; its full sequence is MISSNDFRTGVSIELDGSVWRVVEFLHVKPGKGSAFVRTKLKNVQSGSVVERTFRAGETVPQANLEKRVMQHTYKDGDQFVFMDMESYEEASLSQEQIGTRVKYLKEGMEVNVIQWGEQVLEVELPTSVVLEVTQTDPGVKGDTATGGSKPAIVETGAQVMVPLFISEGERIKVDTRNDSYLGRE.

It belongs to the elongation factor P family.

It is found in the cytoplasm. It participates in protein biosynthesis; polypeptide chain elongation. Its function is as follows. Involved in peptide bond synthesis. Stimulates efficient translation and peptide-bond synthesis on native or reconstituted 70S ribosomes in vitro. Probably functions indirectly by altering the affinity of the ribosome for aminoacyl-tRNA, thus increasing their reactivity as acceptors for peptidyl transferase. This Acaryochloris marina (strain MBIC 11017) protein is Elongation factor P.